A 315-amino-acid polypeptide reads, in one-letter code: beta-hydroxyaspartate dehydratase (315 aa).

An N6-(pyridoxal phosphate)lysine modification is found at Lys53. Pyridoxal 5'-phosphate is bound by residues Asn80, 179–183 (GGGGM), and Thr303.

Requires pyridoxal 5'-phosphate as cofactor.

It carries out the reaction (3S)-3-hydroxy-D-aspartate = iminosuccinate + H2O. Functionally, catalyzes the dehydration of (2R,3S)-beta-hydroxyaspartate ((3S)-3-hydroxy-D-aspartate) into iminosuccinate. Is essential for the growth of P.denitrificans in the presence of glycolate and glyoxylate since it functions in glyoxylate assimilation via the beta-hydroxyaspartate cycle (BHAC). The polypeptide is beta-hydroxyaspartate dehydratase (Paracoccus denitrificans (strain Pd 1222)).